The primary structure comprises 204 residues: 3-isopropylmalate dehydratase small subunit (204 aa).

It belongs to the LeuD family. LeuD type 1 subfamily. As to quaternary structure, heterodimer of LeuC and LeuD.

The catalysed reaction is (2R,3S)-3-isopropylmalate = (2S)-2-isopropylmalate. The protein operates within amino-acid biosynthesis; L-leucine biosynthesis; L-leucine from 3-methyl-2-oxobutanoate: step 2/4. Its function is as follows. Catalyzes the isomerization between 2-isopropylmalate and 3-isopropylmalate, via the formation of 2-isopropylmaleate. The protein is 3-isopropylmalate dehydratase small subunit of Psychromonas ingrahamii (strain DSM 17664 / CCUG 51855 / 37).